The chain runs to 396 residues: 4-hydroxy-3-methylbut-2-en-1-yl diphosphate synthase (ferredoxin) (396 aa).

[4Fe-4S] cluster contacts are provided by cysteine 305, cysteine 308, cysteine 339, and glutamate 346.

The protein belongs to the IspG family. It depends on [4Fe-4S] cluster as a cofactor.

It carries out the reaction (2E)-4-hydroxy-3-methylbut-2-enyl diphosphate + 2 oxidized [2Fe-2S]-[ferredoxin] + H2O = 2-C-methyl-D-erythritol 2,4-cyclic diphosphate + 2 reduced [2Fe-2S]-[ferredoxin] + H(+). Its pathway is isoprenoid biosynthesis; isopentenyl diphosphate biosynthesis via DXP pathway; isopentenyl diphosphate from 1-deoxy-D-xylulose 5-phosphate: step 5/6. Functionally, converts 2C-methyl-D-erythritol 2,4-cyclodiphosphate (ME-2,4cPP) into 1-hydroxy-2-methyl-2-(E)-butenyl 4-diphosphate. This Gloeobacter violaceus (strain ATCC 29082 / PCC 7421) protein is 4-hydroxy-3-methylbut-2-en-1-yl diphosphate synthase (ferredoxin).